Consider the following 147-residue polypeptide: Transcriptional repressor NrdR (147 aa).

A zinc finger lies at 3–34 (CPFCGHLETQVVETRVSEDADFVRRRRQCSAC). The ATP-cone domain occupies 49 to 139 (PVVVKKDGSR…VYRSFEDVDE (91 aa)).

The protein belongs to the NrdR family. Requires Zn(2+) as cofactor.

Its function is as follows. Negatively regulates transcription of bacterial ribonucleotide reductase nrd genes and operons by binding to NrdR-boxes. The protein is Transcriptional repressor NrdR of Variovorax paradoxus (strain S110).